A 729-amino-acid polypeptide reads, in one-letter code: Solute carrier family 15 member 2 (729 aa).

The interval 1 to 35 (MNPFQKNESKETLFSPVSTEEMLPRPPSPPKKSPP) is disordered. The Cytoplasmic segment spans residues 1-57 (MNPFQKNESKETLFSPVSTEEMLPRPPSPPKKSPPKIFGSSYPVSIAFIVVNEFCER). Serine 9 carries the phosphoserine modification. Phosphothreonine is present on threonine 12. Residue serine 28 is modified to Phosphoserine. The helical transmembrane segment at 58–78 (FSYYGMKAVLTLYFLYFLHWN) threads the bilayer. Residues 79-87 (EDTSTSVYH) are Extracellular-facing. A helical membrane pass occupies residues 88–108 (AFSSLCYFTPILGAAIADSWL). Over 109–113 (GKFKT) the chain is Cytoplasmic. Residues 114–134 (IIYLSLVYVLGHVFKSLGAIP) form a helical membrane-spanning segment. The Extracellular portion of the chain corresponds to 135–139 (ILGGK). A helical transmembrane segment spans residues 140–160 (MLHTILSLVGLSLIALGTGGI). At 161-183 (KPCVAAFGGDQFEEEHAEARTRY) the chain is on the cytoplasmic side. The chain crosses the membrane as a helical span at residues 184-204 (FSVFYLAINAGSLISTFITPM). The Extracellular segment spans residues 205–217 (LRGDVKCFGQDCY). The helical transmembrane segment at 218–238 (ALAFGVPGLLMVLALVVFAMG) threads the bilayer. The Cytoplasmic portion of the chain corresponds to 239–295 (SKMYRKPPPEGNIVAQVIKCIWFALCNRFRNRSGDLPKRQHWLDWAAEKYPKHLIAD). A helical transmembrane segment spans residues 296 to 316 (VKALTRVLFLYIPLPMFWALL). The Extracellular segment spans residues 317-343 (DQQGSRWTLQANKMNGDLGFFVLQPDQ). A helical membrane pass occupies residues 344 to 364 (MQVLNPFLVLIFIPLFDLVIY). Residues 365–380 (RLISKCRINFSSLRKM) are Cytoplasmic-facing. The chain crosses the membrane as a helical span at residues 381-401 (AVGMILACLAFAVAALVETKI). The Extracellular segment spans residues 402–611 (NGMIHPQPAS…PVNKLSIAWQ (210 aa)). The extracellular domain (ECD) stretch occupies residues 402 to 611 (NGMIHPQPAS…PVNKLSIAWQ (210 aa)). N-linked (GlcNAc...) asparagine glycosylation is found at asparagine 435, asparagine 448, asparagine 528, and asparagine 587. The chain crosses the membrane as a helical span at residues 612–632 (LPQYVLVTAAEVMFSVTGLEF). Residues 633 to 643 (SYSQAPSSMKS) lie on the Cytoplasmic side of the membrane. Residues 644-664 (VLQAAWLLTVAVGNIIVLVVA) traverse the membrane as a helical segment. Residues 665-674 (QFSGLAQWAE) are Extracellular-facing. A helical membrane pass occupies residues 675-695 (FVLFSCLLLVVCLIFSVMAYY). Over 696 to 729 (YVPLKSEDTREATDKQIPAVQGNMINLETKNTRL) the chain is Cytoplasmic.

The protein belongs to the major facilitator superfamily. Proton-dependent oligopeptide transporter (POT/PTR) (TC 2.A.17) family. In terms of assembly, interacts (via extracellular domain region) with trypsin. As to expression, strongly expressed in kidney cortex and medulla. Also detected in brain, lung and spleen. Expressed in choroid plexus.

Its subcellular location is the apical cell membrane. The protein resides in the cytoplasmic vesicle. It is found in the phagosome membrane. It localises to the cell membrane. It carries out the reaction a dipeptide(out) + 2 H(+)(out) = a dipeptide(in) + 2 H(+)(in). The enzyme catalyses glycyl-L-leucine(out) + 2 H(+)(out) = glycyl-L-leucine(in) + 2 H(+)(in). It catalyses the reaction glycyl-L-lysine(out) + 2 H(+)(out) = glycyl-L-lysine(in) + 2 H(+)(in). The catalysed reaction is glycyl-L-glutamate(out) + 3 H(+)(out) = glycyl-L-glutamate(in) + 3 H(+)(in). It carries out the reaction L-alanyl-L-alanine(out) + 2 H(+)(out) = L-alanyl-L-alanine(in) + 2 H(+)(in). The enzyme catalyses an L-amino acid tripeptide(out) + 2 H(+)(out) = an L-amino acid tripeptide(in) + 2 H(+)(in). It catalyses the reaction N-acetyl-D-muramoyl-L-alanyl-D-isoglutamine(out) + 3 H(+)(out) = N-acetyl-D-muramoyl-L-alanyl-D-isoglutamine(in) + 3 H(+)(in). The catalysed reaction is carnosine(out) + 2 H(+)(out) = carnosine(in) + 2 H(+)(in). Proton-coupled amino-acid transporter that transports oligopeptides of 2 to 4 amino acids with a preference for dipeptides. Transports neutral and anionic dipeptides with a proton to peptide stoichiometry of 2:1 or 3:1. In kidney, involved in the absorption of circulating di- and tripeptides from the glomerular filtrate. Can also transport beta-lactam antibiotics, such as the aminocephalosporin cefadroxil, and other antiviral and anticancer drugs. Transports the dipeptide-like aminopeptidase inhibitor bestatin. Also able to transport carnosine. Involved in innate immunity by promoting the detection of microbial pathogens by NOD-like receptors (NLRs). Mediates transport of bacterial peptidoglycans across the plasma membrane or, in macrophages, the phagosome membrane: catalyzes the transport of certain bacterial peptidoglycans, such as muramyl dipeptide (MDP), the NOD2 ligand. The protein is Solute carrier family 15 member 2 of Rattus norvegicus (Rat).